Here is a 95-residue protein sequence, read N- to C-terminus: Putative regulatory protein Daud_1598 (95 aa).

This sequence belongs to the RemA family.

The polypeptide is Putative regulatory protein Daud_1598 (Desulforudis audaxviator (strain MP104C)).